The chain runs to 301 residues: Methionyl-tRNA formyltransferase (301 aa).

109–112 (SILP) lines the (6S)-5,6,7,8-tetrahydrofolate pocket.

The protein belongs to the Fmt family.

The enzyme catalyses L-methionyl-tRNA(fMet) + (6R)-10-formyltetrahydrofolate = N-formyl-L-methionyl-tRNA(fMet) + (6S)-5,6,7,8-tetrahydrofolate + H(+). In terms of biological role, attaches a formyl group to the free amino group of methionyl-tRNA(fMet). The formyl group appears to play a dual role in the initiator identity of N-formylmethionyl-tRNA by promoting its recognition by IF2 and preventing the misappropriation of this tRNA by the elongation apparatus. In Campylobacter curvus (strain 525.92), this protein is Methionyl-tRNA formyltransferase.